A 709-amino-acid polypeptide reads, in one-letter code: RxLR effector protein PITG_15110 (709 aa).

A signal peptide spans 1–18 (MHAYSAAVLMGLLMVAEG). Positions 51 to 66 (RLLREPETTEASNEDR) match the RxLR-dEER motif.

Belongs to the RxLR effector family.

Its subcellular location is the secreted. It is found in the host cytoplasm. The protein localises to the host cytoskeleton. Functionally, effector that enhances P.infestans colonization of Nicotiana benthamiana leaves. This Phytophthora infestans (strain T30-4) (Potato late blight agent) protein is RxLR effector protein PITG_15110.